The chain runs to 195 residues: Adenylate kinase (195 aa).

Gly10–Thr15 serves as a coordination point for ATP. The NMP stretch occupies residues Ser30–Val59. Residues Thr31, Arg36, Gly57–Val59, Gly85–Arg88, and Gln92 contribute to the AMP site. Positions Asn126–Asp143 are LID. Arg127 is a binding site for ATP. Arg150 lines the AMP pocket. An ATP-binding site is contributed by Ala178.

Belongs to the adenylate kinase family. In terms of assembly, monomer.

Its subcellular location is the cytoplasm. The enzyme catalyses AMP + ATP = 2 ADP. It functions in the pathway purine metabolism; AMP biosynthesis via salvage pathway; AMP from ADP: step 1/1. Functionally, catalyzes the reversible transfer of the terminal phosphate group between ATP and AMP. Plays an important role in cellular energy homeostasis and in adenine nucleotide metabolism. The protein is Adenylate kinase of Xanthobacter autotrophicus (strain ATCC BAA-1158 / Py2).